The sequence spans 765 residues: AMP deaminase 3 (765 aa).

Phosphoserine occurs at positions 85 and 106. Zn(2+) is bound by residues histidine 315 and histidine 317. Substrate-binding positions include histidine 317 and 386–391 (KFNSKY). Residue histidine 584 coordinates Zn(2+). Glutamate 587 contacts substrate. The Proton acceptor role is filled by histidine 606. Aspartate 661 serves as a coordination point for Zn(2+). Position 662-665 (662-665 (DPMQ)) interacts with substrate.

This sequence belongs to the metallo-dependent hydrolases superfamily. Adenosine and AMP deaminases family. In terms of assembly, homotetramer. Zn(2+) serves as cofactor. As to expression, expressed in adult tissues such as aorta, heart, kidney, lung, muscle and thyroid. Weakly expressed in thyroid and not detected in liver.

The catalysed reaction is AMP + H2O + H(+) = IMP + NH4(+). It functions in the pathway purine metabolism; IMP biosynthesis via salvage pathway; IMP from AMP: step 1/1. Functionally, AMP deaminase plays a critical role in energy metabolism. This is AMP deaminase 3 from Rattus norvegicus (Rat).